Consider the following 1181-residue polypeptide: Katanin p80 WD40 repeat-containing subunit B1 homolog KTN80.2 (1181 aa).

WD repeat units lie at residues 13-53, 56-95, 98-137, 140-181, 183-221, 224-264, and 266-303; these read AHSA…SLMS, GHTS…MVRA, GHRS…CIQT, GHSR…HEFK, HEGP…LIGS, PEAT…DGVD, and GWST…IEPY. The DWD box motif lies at 114–130; the sequence is FLASGSSDANLKIWDIR. 5 disordered regions span residues 361–383, 503–597, 702–739, 754–869, and 988–1008; these read AHKS…NKSL, KPPR…ESKS, TSMA…QTRT, KMKS…VIST, and TKTQ…ISGR. Polar residues-rich tracts occupy residues 365 to 379 and 509 to 526; these read GSLS…QAGD and RSPS…STDS. 2 stretches are compositionally biased toward basic and acidic residues: residues 530 to 553 and 569 to 585; these read DSKK…DDRG and RSER…ELKS. 4 stretches are compositionally biased toward polar residues: residues 703 to 739, 754 to 791, 822 to 841, and 850 to 859; these read SMAT…QTRT, KMKS…TRTS, SATN…QAKT, and ILNQRQTTNM. Residues 998–1008 show a composition bias toward basic and acidic residues; that stretch reads TQKEEPQISGR.

Belongs to the WD repeat KATNB1 family. In terms of assembly, component of KTN80-KTN1 complexes composed of a hexamer of KTN1-KTN80 heterodimers that sense microtubule (MT) geometry to confer precise MT severing. Interacts directly with AAA1/KTN1. Interacts with subunits of the CUL4-based E3 ligase complex DDB1A and DDB1B. As to expression, expressed at low levels in siliques, flowers, leaves, stems and roots.

The protein resides in the cytoplasm. It is found in the cytoskeleton. Its function is as follows. May participate in a complex which severs microtubules in an ATP-dependent manner. Microtubule severing may promote rapid reorganization of cellular microtubule arrays. Confers precision to microtubule (MT) severing by specific targeting of KTN1 to MT cleavage sites such as crossover or branching nucleation sites. Together with other KTN80s, regulates cell elongation by modulating MT organization. Negative regulator of abscisic acid (ABA) responses. May function as a substrate receptor for cullin-RING ubiquitin ligase 4 complexes (CRL4), a family of E3 ligases involved in protein degradation. In Arabidopsis thaliana (Mouse-ear cress), this protein is Katanin p80 WD40 repeat-containing subunit B1 homolog KTN80.2.